The sequence spans 305 residues: Popeye domain-containing protein 3 (305 aa).

A glycan (N-linked (GlcNAc...) asparagine) is linked at N4. Transmembrane regions (helical) follow at residues S34–F54, S55–A75, and I77–V99. Residues P273–Q305 form a disordered region. N298 carries N-linked (GlcNAc...) asparagine glycosylation.

It belongs to the popeye family. Expressed first preferentially in atrium and later also in the subepicardial compact layer of the ventricles.

It localises to the membrane. In terms of biological role, may play a role in the maintenance of heart function mediated, at least in part, through cAMP-binding. May play a role in the regulation of KCNK2-mediated current amplitude. In Gallus gallus (Chicken), this protein is Popeye domain-containing protein 3 (POPDC3).